Consider the following 746-residue polypeptide: GTPase-activating protein GYP7 (746 aa).

S265 and S339 each carry phosphoserine. The region spanning 385–633 (LENDSLRGKV…HIWENFWTFY (249 aa)) is the Rab-GAP TBC domain. The disordered stretch occupies residues 470-505 (TIDGLPPPPQQLPANENNSTSPESANDESDDADDGV). Residues 481–491 (LPANENNSTSP) show a composition bias toward polar residues.

The protein resides in the cytoplasm. Its function is as follows. GTPase-activating protein (GAP) that most effectively accelerates the intrinsic GTPase activity of Ypt/Rab-type GTPase YPT7 involved in vacuole docking and fusion. It is also active, but to a lesser extent, on YPT31, YPT32, YPT1, YPT6 and SEC4. Provides a catalytic arginine (arginine finger) in trans to accelerate the GTP hydrolysis rate of the substrate GTPase. In Saccharomyces cerevisiae (strain ATCC 204508 / S288c) (Baker's yeast), this protein is GTPase-activating protein GYP7 (GYP7).